A 291-amino-acid polypeptide reads, in one-letter code: Lipoyl synthase (291 aa).

Positions 43, 48, 54, 69, 73, 76, and 280 each coordinate [4Fe-4S] cluster. A Radical SAM core domain is found at 55–269; the sequence is FSSRTATFLI…AAYGRARGIP (215 aa).

The protein belongs to the radical SAM superfamily. Lipoyl synthase family. The cofactor is [4Fe-4S] cluster.

It is found in the cytoplasm. It carries out the reaction [[Fe-S] cluster scaffold protein carrying a second [4Fe-4S](2+) cluster] + N(6)-octanoyl-L-lysyl-[protein] + 2 oxidized [2Fe-2S]-[ferredoxin] + 2 S-adenosyl-L-methionine + 4 H(+) = [[Fe-S] cluster scaffold protein] + N(6)-[(R)-dihydrolipoyl]-L-lysyl-[protein] + 4 Fe(3+) + 2 hydrogen sulfide + 2 5'-deoxyadenosine + 2 L-methionine + 2 reduced [2Fe-2S]-[ferredoxin]. Its pathway is protein modification; protein lipoylation via endogenous pathway; protein N(6)-(lipoyl)lysine from octanoyl-[acyl-carrier-protein]: step 2/2. Catalyzes the radical-mediated insertion of two sulfur atoms into the C-6 and C-8 positions of the octanoyl moiety bound to the lipoyl domains of lipoate-dependent enzymes, thereby converting the octanoylated domains into lipoylated derivatives. This chain is Lipoyl synthase, found in Oleidesulfovibrio alaskensis (strain ATCC BAA-1058 / DSM 17464 / G20) (Desulfovibrio alaskensis).